The sequence spans 335 residues: 2,4-dienoyl-CoA reductase [(3E)-enoyl-CoA-producing], mitochondrial (335 aa).

A mitochondrion-targeting transit peptide spans 1–34 (MALLGRAFFAGVSRLPCDPGPQRFFSFGTKTLYQ). Residues K42 and K49 each carry the N6-acetyllysine; alternate modification. An N6-succinyllysine; alternate mark is found at K42 and K49. 66 to 71 (GGGTGL) is a binding site for NADP(+). Phosphothreonine is present on T69. Position 73 is an N6-succinyllysine (K73). NADP(+) is bound at residue R91. Position 91 (R91) interacts with substrate. 2 positions are modified to N6-acetyllysine; alternate: K97 and K106. K97 and K106 each carry N6-succinyllysine; alternate. D117 serves as a coordination point for NADP(+). Substrate contacts are provided by R119 and F149. The Proton acceptor role is filled by Y199. NADP(+) contacts are provided by residues K214 and 240 to 243 (PGPI). Position 244 is an N6-acetyllysine; alternate (K244). K244 is subject to N6-succinyllysine; alternate. Position 251 (R251) interacts with substrate. The residue at position 260 (K260) is an N6-acetyllysine; alternate. K260 carries the post-translational modification N6-succinyllysine; alternate. K315 bears the N6-acetyllysine mark. N6-acetyllysine; alternate is present on K319. K319 carries the post-translational modification N6-succinyllysine; alternate.

Belongs to the short-chain dehydrogenases/reductases (SDR) family. 2,4-dienoyl-CoA reductase subfamily. Homotetramer.

Its subcellular location is the mitochondrion. It carries out the reaction a (2E,4E)-dienoyl-CoA + NADPH + H(+) = a 4,5-saturated-(3E)-enoyl-CoA + NADP(+). The enzyme catalyses a (2E,4Z)-dienoyl-CoA + NADPH + H(+) = a 4,5-saturated-(3E)-enoyl-CoA + NADP(+). It catalyses the reaction (2E,4E)-hexadienoyl-CoA + NADPH + H(+) = (3E)-hexenoyl-CoA + NADP(+). Functionally, auxiliary enzyme of beta-oxidation. It participates in the metabolism of unsaturated fatty enoyl-CoA esters having double bonds in both even- and odd-numbered positions in mitochondria. Catalyzes the NADP-dependent reduction of 2,4-dienoyl-CoA to yield trans-3-enoyl-CoA. This Mus musculus (Mouse) protein is 2,4-dienoyl-CoA reductase [(3E)-enoyl-CoA-producing], mitochondrial (Decr1).